We begin with the raw amino-acid sequence, 299 residues long: MKPISIIGVPMDLGQTRRGVDMGPSAMRYAGVIERLERLHYDIEDLGDIPIGKAERLHEQGDSRLRNLKAVAEANEKLAAAVDQVVQRGRFPLVLGGDHSIAIGTLAGVAKHYERLGVIWYDAHGDVNTAETSPSGNIHGMPLAASLGFGHPALTQIGGYSPKIKPEHVVLIGVRSLDEGEKKFIREKGIKIYTMHEVDRLGMTRVMEETIAYLKERTDGVHLSLDLDGLDPSDAPGVGTPVIGGLTYRESHLAMEMLAEAQIITSAEFVEVNPILDERNKTASVAVALMGSLFGEKLM.

Positions 99, 122, 124, and 126 each coordinate Mn(2+). Substrate is bound by residues 124–128 (HGDVN), 135–137 (SGN), and D178. Residues D226 and D228 each contribute to the Mn(2+) site. Positions 240 and 271 each coordinate substrate.

The protein belongs to the arginase family. In terms of assembly, homohexamer. It depends on Mn(2+) as a cofactor.

The catalysed reaction is L-arginine + H2O = urea + L-ornithine. Its pathway is nitrogen metabolism; urea cycle; L-ornithine and urea from L-arginine: step 1/1. Functionally, controls arginine catabolism. This is Arginase (rocF) from Bacillus caldovelox.